A 444-amino-acid chain; its full sequence is Homogentisate 1,2-dioxygenase (444 aa).

The Proton acceptor role is filled by histidine 298. The Fe cation site is built by histidine 341 and glutamate 347. Homogentisate-binding residues include tyrosine 356 and histidine 377. Histidine 377 is a Fe cation binding site.

It belongs to the homogentisate dioxygenase family. As to quaternary structure, hexamer; dimer of trimers. Fe cation serves as cofactor.

It catalyses the reaction homogentisate + O2 = 4-maleylacetoacetate + H(+). It participates in amino-acid degradation; L-phenylalanine degradation; acetoacetate and fumarate from L-phenylalanine: step 4/6. Involved in the catabolism of homogentisate (2,5-dihydroxyphenylacetate or 2,5-OH-PhAc), a central intermediate in the degradation of phenylalanine and tyrosine. Catalyzes the oxidative ring cleavage of the aromatic ring of homogentisate to yield maleylacetoacetate. The chain is Homogentisate 1,2-dioxygenase from Burkholderia ambifaria (strain ATCC BAA-244 / DSM 16087 / CCUG 44356 / LMG 19182 / AMMD) (Burkholderia cepacia (strain AMMD)).